A 431-amino-acid chain; its full sequence is MTISGYRKAIWPRRIAVLSVHTSPLEQPGTKDAGGMNVYISQTAVEMARRGVSVEVFTRATSSDQPPAVELAPGVLVRHIPAGPFEPLERGELPSQLCAFTSGVLRTEAFQEPGYYDLIHSHYWLSGQVGWLARDRWGVPLVHTAHTLAKVKNAALASGDTPEPRTRVIGEEQVVAEADRLVVNTDVEADQLVRLYDAAPDAVRTVSPGVDLERFRPGSRAAARAALGVPADAVVLAFAGRIQPLKAPDVLLRATAALVRRDPGLRRRLVVLVAGGPSGSGLEQPRSLMDLAVELGIDDVTRFLPPQGGQDLVNVYRAADVVAVPSHNESFGLVALEAQACGTPVVAARVGGLPVAVDDEVSGLLVPTHDTEDWADALARVALRPEVRAVLSRGAREHAQRFSWRRTTDALLDIYREAMAAFRGTALEVAV.

1D-myo-inositol 3-phosphate is bound at residue His21. UDP-N-acetyl-alpha-D-glucosamine-binding positions include 27 to 28 (QP) and Gly35. Residues 32-37 (DAGGMN), Arg90, Tyr123, Thr147, and Arg167 each bind 1D-myo-inositol 3-phosphate. UDP-N-acetyl-alpha-D-glucosamine-binding residues include Arg241, Lys246, and Gln307. 3 residues coordinate Mg(2+): Tyr316, Arg317, and Ala319. UDP-N-acetyl-alpha-D-glucosamine contacts are provided by Glu329 and Glu337. Thr343 contacts Mg(2+).

Belongs to the glycosyltransferase group 1 family. MshA subfamily. Homodimer.

The enzyme catalyses 1D-myo-inositol 3-phosphate + UDP-N-acetyl-alpha-D-glucosamine = 1D-myo-inositol 2-acetamido-2-deoxy-alpha-D-glucopyranoside 3-phosphate + UDP + H(+). In terms of biological role, catalyzes the transfer of a N-acetyl-glucosamine moiety to 1D-myo-inositol 3-phosphate to produce 1D-myo-inositol 2-acetamido-2-deoxy-glucopyranoside 3-phosphate in the mycothiol biosynthesis pathway. This Saccharomonospora viridis (strain ATCC 15386 / DSM 43017 / JCM 3036 / CCUG 5913 / NBRC 12207 / NCIMB 9602 / P101) (Thermoactinomyces viridis) protein is D-inositol 3-phosphate glycosyltransferase.